We begin with the raw amino-acid sequence, 704 residues long: Tryptophan synthase (704 aa).

The tract at residues 1–292 is tryptophan synthase alpha chain; that stretch reads MEAIKKVFEQ…QLTPNAETAK (292 aa). Catalysis depends on proton acceptor residues Glu-49 and Asp-60. A tryptophan synthase beta chain region spans residues 293–704; the sequence is GVENILPARF…HVSSNAIPSK (412 aa). At Lys-380 the chain carries N6-(pyridoxal phosphate)lysine.

It in the N-terminal section; belongs to the TrpA family. In the C-terminal section; belongs to the TrpB family. Pyridoxal 5'-phosphate serves as cofactor.

The catalysed reaction is (1S,2R)-1-C-(indol-3-yl)glycerol 3-phosphate + L-serine = D-glyceraldehyde 3-phosphate + L-tryptophan + H2O. Its pathway is amino-acid biosynthesis; L-tryptophan biosynthesis; L-tryptophan from chorismate: step 5/5. In Coprinopsis cinerea (strain Okayama-7 / 130 / ATCC MYA-4618 / FGSC 9003) (Inky cap fungus), this protein is Tryptophan synthase (TRP-1).